Here is a 761-residue protein sequence, read N- to C-terminus: Coenzyme PQQ synthesis protein F (761 aa).

H49 lines the Zn(2+) pocket. E52 acts as the Proton acceptor in catalysis. Residues H53 and E130 each coordinate Zn(2+).

Belongs to the peptidase M16 family. Requires Zn(2+) as cofactor.

It participates in cofactor biosynthesis; pyrroloquinoline quinone biosynthesis. Functionally, required for coenzyme pyrroloquinoline quinone (PQQ) biosynthesis. It is thought that this protein is a protease that cleaves peptides bond in a small peptide (gene pqqA), providing the glutamate and tyrosine residues which are necessary for the synthesis of PQQ. The chain is Coenzyme PQQ synthesis protein F (pqqF) from Klebsiella pneumoniae.